The following is an 846-amino-acid chain: Leucine--tRNA ligase (846 aa).

The 'HIGH' region motif lies at 47-57 (PYPSGRIHMGH). The short motif at 621 to 625 (KMSKS) is the 'KMSKS' region element. K624 contacts ATP.

This sequence belongs to the class-I aminoacyl-tRNA synthetase family.

The protein resides in the cytoplasm. The enzyme catalyses tRNA(Leu) + L-leucine + ATP = L-leucyl-tRNA(Leu) + AMP + diphosphate. The protein is Leucine--tRNA ligase of Zymomonas mobilis subsp. mobilis (strain ATCC 31821 / ZM4 / CP4).